We begin with the raw amino-acid sequence, 308 residues long: Aspartate carbamoyltransferase catalytic subunit (308 aa).

Carbamoyl phosphate-binding residues include arginine 59 and threonine 60. L-aspartate is bound at residue lysine 87. Arginine 109, histidine 137, and glutamine 140 together coordinate carbamoyl phosphate. Arginine 170 and arginine 224 together coordinate L-aspartate. Glycine 265 and proline 266 together coordinate carbamoyl phosphate.

The protein belongs to the aspartate/ornithine carbamoyltransferase superfamily. ATCase family. Heterododecamer (2C3:3R2) of six catalytic PyrB chains organized as two trimers (C3), and six regulatory PyrI chains organized as three dimers (R2).

The catalysed reaction is carbamoyl phosphate + L-aspartate = N-carbamoyl-L-aspartate + phosphate + H(+). It functions in the pathway pyrimidine metabolism; UMP biosynthesis via de novo pathway; (S)-dihydroorotate from bicarbonate: step 2/3. In terms of biological role, catalyzes the condensation of carbamoyl phosphate and aspartate to form carbamoyl aspartate and inorganic phosphate, the committed step in the de novo pyrimidine nucleotide biosynthesis pathway. In Flavobacterium psychrophilum (strain ATCC 49511 / DSM 21280 / CIP 103535 / JIP02/86), this protein is Aspartate carbamoyltransferase catalytic subunit.